We begin with the raw amino-acid sequence, 395 residues long: Elongation factor Tu (395 aa).

Residues 10–204 (KPHVNIGTIG…NVDEYIPLPQ (195 aa)) enclose the tr-type G domain. Residues 19-26 (GHVDHGKT) are G1. Residue 19–26 (GHVDHGKT) participates in GTP binding. Threonine 26 is a binding site for Mg(2+). The G2 stretch occupies residues 60-64 (GITIN). The tract at residues 81-84 (DCPG) is G3. Residues 81-85 (DCPGH) and 136-139 (NKVD) contribute to the GTP site. A G4 region spans residues 136–139 (NKVD). The interval 174–176 (SAL) is G5.

Belongs to the TRAFAC class translation factor GTPase superfamily. Classic translation factor GTPase family. EF-Tu/EF-1A subfamily. In terms of assembly, monomer.

It is found in the cytoplasm. It carries out the reaction GTP + H2O = GDP + phosphate + H(+). Its function is as follows. GTP hydrolase that promotes the GTP-dependent binding of aminoacyl-tRNA to the A-site of ribosomes during protein biosynthesis. This is Elongation factor Tu from Amoebophilus asiaticus (strain 5a2).